We begin with the raw amino-acid sequence, 241 residues long: MASDAPEVKAPKAKTQKKPKTAPTHPPYIQMVTDAILSLKERDGSSLPALKKFIEAKYGKDIHDKKFPKTLSLALKTFVKNGKLVKVKNSYKLSDAQKSKAKAAAKPKAAPKKAAAPKKAAAPKKAKAPKKEGEKKAVKPKSEKKAAKPKTEKKPKAAKKPKAAKKPAAKKPAAKKPAAKKATPKKAAAPKKAAAPKKAKAATPKKAKAATPKKAKAAAKPKAAAKPKAAAKPKAKAAKKA.

Over residues 1-10 (MASDAPEVKA) the composition is skewed to basic and acidic residues. Disordered regions lie at residues 1–27 (MASD…THPP) and 89–241 (NSYK…AKKA). Residues 11 to 20 (PKAKTQKKPK) are compositionally biased toward basic residues. Residues 24-95 (THPPYIQMVT…KVKNSYKLSD (72 aa)) form the H15 domain. A compositionally biased stretch (basic residues) spans 99–111 (SKAKAAAKPKAAP). 3 repeat units span residues 111-116 (PKKAAA), 117-122 (PKKAAA), and 123-128 (PKKAKA). The segment at 111–217 (PKKAAAPKKA…KAATPKKAKA (107 aa)) is 8 X 6 AA repeats of P-K-K-A-[AK]-A. The span at 129 to 155 (PKKEGEKKAVKPKSEKKAAKPKTEKKP) shows a compositional bias: basic and acidic residues. 2 stretches are compositionally biased toward basic residues: residues 156 to 184 (KAAK…KATP) and 194 to 241 (AAPK…AKKA). The DNA-binding element occupies 183 to 186 (TPKK). 5 repeat units span residues 184-189 (PKKAAA), 190-195 (PKKAAA), 196-201 (PKKAKA), 204-209 (PKKAKA), and 212-217 (PKKAKA). DNA-binding regions lie at residues 203–206 (TPKK) and 211–214 (TPKK).

Belongs to the histone H1/H5 family.

It localises to the nucleus. It is found in the chromosome. Histones H1 are necessary for the condensation of nucleosome chains into higher-order structures. In Volvox carteri (Green alga), this protein is Histone H1-II (H1-II).